Here is a 317-residue protein sequence, read N- to C-terminus: Adenine deaminase (317 aa).

3 residues coordinate Zn(2+): histidine 14, histidine 16, and histidine 194. Residue glutamate 197 is the Proton donor of the active site. Aspartate 275 contributes to the Zn(2+) binding site. Aspartate 276 is a binding site for substrate.

The protein belongs to the metallo-dependent hydrolases superfamily. Adenosine and AMP deaminases family. Adenine deaminase type 2 subfamily. Zn(2+) serves as cofactor.

It carries out the reaction adenine + H2O + H(+) = hypoxanthine + NH4(+). In terms of biological role, catalyzes the hydrolytic deamination of adenine to hypoxanthine. Plays an important role in the purine salvage pathway and in nitrogen catabolism. This chain is Adenine deaminase, found in Pseudomonas savastanoi pv. phaseolicola (strain 1448A / Race 6) (Pseudomonas syringae pv. phaseolicola (strain 1448A / Race 6)).